The chain runs to 293 residues: tRNA pseudouridine synthase A (293 aa).

The active-site Nucleophile is the aspartate 67. Residue tyrosine 125 participates in substrate binding.

The protein belongs to the tRNA pseudouridine synthase TruA family. Homodimer.

The enzyme catalyses uridine(38/39/40) in tRNA = pseudouridine(38/39/40) in tRNA. Functionally, formation of pseudouridine at positions 38, 39 and 40 in the anticodon stem and loop of transfer RNAs. The protein is tRNA pseudouridine synthase A of Synechococcus sp. (strain CC9605).